Consider the following 230-residue polypeptide: Ribosomal RNA small subunit methyltransferase G (230 aa).

Residues glycine 91, leucine 96, 142 to 143 (VE), and arginine 161 each bind S-adenosyl-L-methionine.

Belongs to the methyltransferase superfamily. RNA methyltransferase RsmG family.

It is found in the cytoplasm. It catalyses the reaction guanosine(527) in 16S rRNA + S-adenosyl-L-methionine = N(7)-methylguanosine(527) in 16S rRNA + S-adenosyl-L-homocysteine. Specifically methylates the N7 position of guanine in position 527 of 16S rRNA. This Burkholderia pseudomallei (strain K96243) protein is Ribosomal RNA small subunit methyltransferase G.